A 346-amino-acid polypeptide reads, in one-letter code: 4-hydroxy-2-oxovalerate aldolase 2 (346 aa).

Positions 8-258 constitute a Pyruvate carboxyltransferase domain; sequence VTLVDTTLRD…HTGVELFPLI (251 aa). Residues 16–17, S170, and H197 each bind substrate; that span reads RD. A Mn(2+)-binding site is contributed by D17. Mn(2+) contacts are provided by H197 and H199. A substrate-binding site is contributed by Y288.

It belongs to the 4-hydroxy-2-oxovalerate aldolase family.

It catalyses the reaction (S)-4-hydroxy-2-oxopentanoate = acetaldehyde + pyruvate. The sequence is that of 4-hydroxy-2-oxovalerate aldolase 2 from Nocardia farcinica (strain IFM 10152).